The chain runs to 208 residues: MITLWGRNNSTNVKKVLLTLEELELPYEQILAGREFGINHDADFLAMNPNGLVPLLRDDESDLILWESNAIVRYLAAQYGQKRLWIDSPARRAEAEKWMDWANQTLSNAHRGILMGLVRTPPEERDQAAIDASCKECDALFALLDAELAKVKWFSGDEFGVGDIAIAPFIYNLFNVGLTWTPRPNLQRWYQQLTERPAVRKVVMIPVS.

Positions 1-83 constitute a GST N-terminal domain; it reads MITLWGRNNS…YLAAQYGQKR (83 aa). Glutathione contacts are provided by residues asparagine 12, asparagine 39, valine 53, and 67–68; that span reads ES. The GST C-terminal domain maps to 88 to 208; sequence SPARRAEAEK…VRKVVMIPVS (121 aa).

It belongs to the GST superfamily.

The enzyme catalyses RX + glutathione = an S-substituted glutathione + a halide anion + H(+). Conjugation of reduced glutathione to a wide number of exogenous and endogenous hydrophobic electrophiles. This Escherichia coli O6:H1 (strain CFT073 / ATCC 700928 / UPEC) protein is Glutathione S-transferase GstB (gstB).